We begin with the raw amino-acid sequence, 282 residues long: Mitochondrial outer membrane protein porin (282 aa).

The protein belongs to the eukaryotic mitochondrial porin family.

It is found in the mitochondrion outer membrane. Functionally, forms a channel through the cell membrane that allows diffusion of small hydrophilic molecules. The channel adopts an open conformation at low or zero membrane potential and a closed conformation at potentials above 30-40 mV. The open state has a weak anion selectivity whereas the closed state is cation-selective. The sequence is that of Mitochondrial outer membrane protein porin (POR1) from Candida albicans (strain SC5314 / ATCC MYA-2876) (Yeast).